The sequence spans 285 residues: HTH-type transcriptional regulator MurR (285 aa).

The region spanning 1 to 77 (MLYLTKIRNA…MALIGEYSAS (77 aa)) is the HTH rpiR-type domain. The segment at residues 37–56 (SRQMAKQLGISQSSIVKFAQ) is a DNA-binding region (H-T-H motif). Positions 128–268 (IIEVISKAPF…FVGLVQLNDV (141 aa)) constitute an SIS domain.

In terms of assembly, homotetramer.

It functions in the pathway amino-sugar metabolism; N-acetylmuramate degradation [regulation]. Represses the expression of the murPQ operon involved in the uptake and degradation of N-acetylmuramic acid (MurNAc). Binds to two adjacent inverted repeats within the operator region. MurNAc 6-phosphate, the substrate of MurQ, is the specific inducer that weakens binding of MurR to the operator. The chain is HTH-type transcriptional regulator MurR from Escherichia coli (strain ATCC 8739 / DSM 1576 / NBRC 3972 / NCIMB 8545 / WDCM 00012 / Crooks).